The following is a 520-amino-acid chain: Bifunctional purine biosynthesis protein PurH (520 aa).

The 147-residue stretch at 1 to 147 (MAKIGRALIS…KNNRDVTVVV (147 aa)) folds into the MGS-like domain.

It belongs to the PurH family.

It carries out the reaction (6R)-10-formyltetrahydrofolate + 5-amino-1-(5-phospho-beta-D-ribosyl)imidazole-4-carboxamide = 5-formamido-1-(5-phospho-D-ribosyl)imidazole-4-carboxamide + (6S)-5,6,7,8-tetrahydrofolate. It catalyses the reaction IMP + H2O = 5-formamido-1-(5-phospho-D-ribosyl)imidazole-4-carboxamide. Its pathway is purine metabolism; IMP biosynthesis via de novo pathway; 5-formamido-1-(5-phospho-D-ribosyl)imidazole-4-carboxamide from 5-amino-1-(5-phospho-D-ribosyl)imidazole-4-carboxamide (10-formyl THF route): step 1/1. The protein operates within purine metabolism; IMP biosynthesis via de novo pathway; IMP from 5-formamido-1-(5-phospho-D-ribosyl)imidazole-4-carboxamide: step 1/1. The polypeptide is Bifunctional purine biosynthesis protein PurH (Geobacter sp. (strain M21)).